Reading from the N-terminus, the 525-residue chain is Arylsulfatase G (525 aa).

Positions 1 to 16 (MGWLFLKVLLAGVSFS) are cleaved as a signal peptide. Ca(2+) contacts are provided by D44, D45, and C84. The active-site Nucleophile is the C84. C84 is modified (3-oxoalanine (Cys)). The N-linked (GlcNAc...) asparagine glycan is linked to N117. K137 serves as a coordination point for substrate. The active site involves H139. Residue S162 coordinates substrate. The N-linked (GlcNAc...) asparagine glycan is linked to N215. H251 lines the substrate pocket. Ca(2+) is bound by residues D302 and N303. N-linked (GlcNAc...) asparagine glycans are attached at residues N356 and N497.

The protein belongs to the sulfatase family. Ca(2+) serves as cofactor. In terms of processing, N-glycosylated. N-glycosylated with both high mannose and complex type sugars. The conversion to 3-oxoalanine (also known as C-formylglycine, FGly), of a serine or cysteine residue in prokaryotes and of a cysteine residue in eukaryotes, is critical for catalytic activity. Post-translationally, the 63-kDa precursor undergoes proteolytic processing in two steps, yielding two fragments in the first step (apparent molecular masses of 44 and 18 kDa). In the second step, the 44-kDa fragment is processed further to the 34- and 10-kDa chains. The 10-kDa chain is a cleavage product of the 44-kDa fragment but linked to the 18-kDa chain through a disulfide bridge. As to expression, widely expressed, with very low expression in brain, lung, heart and skeletal muscle.

Its subcellular location is the lysosome. It catalyses the reaction an aryl sulfate + H2O = a phenol + sulfate + H(+). It carries out the reaction Hydrolysis of the 3-sulfate groups of the N-sulfo-D-glucosamine 3-O-sulfate units of heparin.. Its activity is regulated as follows. Inhibited by phosphate. The phosphate forms a covalent bond with the active site 3-oxoalanine. In terms of biological role, displays arylsulfatase activity at acidic pH towards artificial substrates, such as p-nitrocatechol sulfate and also, but with a lower activity towards p-nitrophenyl sulfate and 4-methylumbelliferyl sulfate. Catalyzes the hydrolysis of the 3-sulfate groups of the N-sulfo-D-glucosamine 3-O-sulfate units of heparin. This is Arylsulfatase G (ARSG) from Homo sapiens (Human).